The chain runs to 56 residues: Large ribosomal subunit protein bL33 (56 aa).

It belongs to the bacterial ribosomal protein bL33 family.

In Orientia tsutsugamushi (strain Ikeda) (Rickettsia tsutsugamushi), this protein is Large ribosomal subunit protein bL33.